A 201-amino-acid chain; its full sequence is Female-specific protein transformer (201 aa).

Residues 1–117 (MDADSSSRSP…RSRSRSRTPR (117 aa)) are disordered. Residues 9–37 (SPRDTRTCARPKEKVPYFADEGRERDRVR) show a composition bias toward basic and acidic residues. Basic residues-rich tracts occupy residues 38–62 (NLRH…RARS) and 99–115 (KQRR…RSRT).

The protein localises to the nucleus speckle. In terms of biological role, member of the regulatory pathway controlling female somatic sexual differentiation, regulated by Sxl. Activates dsx female-specific splicing by promoting the formation of a splicing enhancer complex which consists of tra, tra2 and sr proteins. The protein is Female-specific protein transformer (tra) of Drosophila hydei (Fruit fly).